The chain runs to 286 residues: ATP synthase gamma chain (286 aa).

Belongs to the ATPase gamma chain family. As to quaternary structure, F-type ATPases have 2 components, CF(1) - the catalytic core - and CF(0) - the membrane proton channel. CF(1) has five subunits: alpha(3), beta(3), gamma(1), delta(1), epsilon(1). CF(0) has three main subunits: a, b and c.

It is found in the cell membrane. In terms of biological role, produces ATP from ADP in the presence of a proton gradient across the membrane. The gamma chain is believed to be important in regulating ATPase activity and the flow of protons through the CF(0) complex. The polypeptide is ATP synthase gamma chain (Ureaplasma parvum serovar 3 (strain ATCC 27815 / 27 / NCTC 11736)).